Consider the following 130-residue polypeptide: Anti-adapter protein IraD (130 aa).

The protein belongs to the GpW/Gp25 family. IraD subfamily. As to quaternary structure, interacts with RssB.

The protein resides in the cytoplasm. In terms of biological role, inhibits RpoS proteolysis by regulating RssB activity, thereby increasing the stability of the sigma stress factor RpoS during oxidative stress. Its effect on RpoS stability is due to its interaction with RssB, which probably blocks the interaction of RssB with RpoS, and the consequent delivery of the RssB-RpoS complex to the ClpXP protein degradation pathway. In Escherichia coli (strain K12 / MC4100 / BW2952), this protein is Anti-adapter protein IraD.